The sequence spans 316 residues: MSSHTNLPSPKPVPKPDHRISGTSQTKKPPSSSVAQDQQNLKCPRCNSPNTKFCYYNNYSLSQPRHFCKSCRRYWTRGGALRNVPIGGGCRKTKKSIKPNSSMNTLPSSSSSQRFFSSIMEDSSKFFPPPTTMDFQLAGLSLNKMNDLQLLNNQEVLDLRPMMSSGRENTPVDVGSGLSLMGFGDFNNNHSPTGFTTAGASDGNLASSIETLSCLNQDLHWRLQQQRMAMLFGNSKEETVVVERPQPILYRNLEIVNSSSPSSPTKKGDNQTEWYFGNNSDNEGVISNNANTGGGGSEWNNGIQAWTDLNHYNALP.

Residues 1-42 (MSSHTNLPSPKPVPKPDHRISGTSQTKKPPSSSVAQDQQNLK) form a disordered region. The span at 21-42 (SGTSQTKKPPSSSVAQDQQNLK) shows a compositional bias: polar residues. The Dof-type zinc-finger motif lies at 41-95 (LKCPRCNSPNTKFCYYNNYSLSQPRHFCKSCRRYWTRGGALRNVPIGGGCRKTKK). 4 residues coordinate Zn(2+): Cys43, Cys46, Cys68, and Cys71. Disordered regions lie at residues 92–111 (KTKKSIKPNSSMNTLPSSSS) and 257–294 (NSSSPSSPTKKGDNQTEWYFGNNSDNEGVISNNANTGG). A compositionally biased stretch (low complexity) spans 101 to 111 (SSMNTLPSSSS). Polar residues predominate over residues 257–291 (NSSSPSSPTKKGDNQTEWYFGNNSDNEGVISNNAN).

The protein resides in the nucleus. Transcription factor that binds specifically to a 5'-AA[AG]G-3' consensus core sequence. The sequence is that of Dof zinc finger protein DOF5.7 (DOF5.7) from Arabidopsis thaliana (Mouse-ear cress).